We begin with the raw amino-acid sequence, 283 residues long: Probable replication-associated protein repA1 (283 aa).

It belongs to the IncFII RepA family.

This protein is essential for plasmid replication; it is involved in copy control functions. The polypeptide is Probable replication-associated protein repA1 (repA1) (Buchnera aphidicola subsp. Schizaphis graminum (strain Sg)).